Consider the following 180-residue polypeptide: Pro-glucagon (180 aa).

Residues 1 to 20 (MKTVYIVAGLFVMLVQGSWQ) form the signal peptide. The disordered stretch occupies residues 23–59 (PQDTEENARSFPASQTEPLEDPDQINEDKRHSQGTFT). The residue at position 54 (Ser-54) is a Phosphoserine. A propeptide spanning residues 84-89 (NRNNIA) is cleaved from the precursor. Ser-105 and Ser-108 each carry phosphoserine. The residue at position 127 (Arg-127) is an Arginine amide. Positions 131-145 (DFPEEVAIAEELGRR) are excised as a propeptide. A phosphoserine mark is found at Ser-150 and Ser-152.

It belongs to the glucagon family. Post-translationally, proglucagon is post-translationally processed in a tissue-specific manner in pancreatic A cells and intestinal L cells. In pancreatic A cells, the major bioactive hormone is glucagon cleaved by PCSK2/PC2. In the intestinal L cells PCSK1/PC1 liberates GLP-1, GLP-2, glicentin and oxyntomodulin. GLP-1 is further N-terminally truncated by post-translational processing in the intestinal L cells resulting in GLP-1(7-37) GLP-1-(7-36)amide. The C-terminal amidation is neither important for the metabolism of GLP-1 nor for its effects on the endocrine pancreas. Glucagon is secreted in the A cells of the islets of Langerhans. GLP-1, GLP-2, oxyntomodulin and glicentin are secreted from enteroendocrine cells throughout the gastrointestinal tract.

It is found in the secreted. Functionally, plays a key role in glucose metabolism and homeostasis. Regulates blood glucose by increasing gluconeogenesis and decreasing glycolysis. A counterregulatory hormone of insulin, raises plasma glucose levels in response to insulin-induced hypoglycemia. Plays an important role in initiating and maintaining hyperglycemic conditions in diabetes. In terms of biological role, potent stimulator of glucose-dependent insulin release. Also stimulates insulin release in response to IL6. Plays important roles on gastric motility and the suppression of plasma glucagon levels. May be involved in the suppression of satiety and stimulation of glucose disposal in peripheral tissues, independent of the actions of insulin. Has growth-promoting activities on intestinal epithelium. May also regulate the hypothalamic pituitary axis (HPA) via effects on LH, TSH, CRH, oxytocin, and vasopressin secretion. Increases islet mass through stimulation of islet neogenesis and pancreatic beta cell proliferation. Inhibits beta cell apoptosis. Stimulates intestinal growth and up-regulates villus height in the small intestine, concomitant with increased crypt cell proliferation and decreased enterocyte apoptosis. The gastrointestinal tract, from the stomach to the colon is the principal target for GLP-2 action. Plays a key role in nutrient homeostasis, enhancing nutrient assimilation through enhanced gastrointestinal function, as well as increasing nutrient disposal. Stimulates intestinal glucose transport and decreases mucosal permeability. Its function is as follows. May modulate gastric acid secretion and the gastro-pyloro-duodenal activity. May play an important role in intestinal mucosal growth in the early period of life. Functionally, oxyntomodulin significantly reduces food intake. The chain is Pro-glucagon (Gcg) from Rattus norvegicus (Rat).